We begin with the raw amino-acid sequence, 622 residues long: 3-(3-hydroxy-phenyl)propionate/3-hydroxycinnamic acid hydroxylase (622 aa).

FAD contacts are provided by residues 20-49 (DVAIIGAGPVGLMIANYLGLQGVRVVVLEK) and 288-298 (FRVDRVLLAGD).

It belongs to the PheA/TfdB FAD monooxygenase family. Requires FAD as cofactor.

The catalysed reaction is 3-(3-hydroxyphenyl)propanoate + NADH + O2 + H(+) = 3-(2,3-dihydroxyphenyl)propanoate + NAD(+) + H2O. It carries out the reaction (2E)-3-(3-hydroxyphenyl)prop-2-enoate + NADH + O2 + H(+) = (2E)-3-(2,3-dihydroxyphenyl)prop-2-enoate + NAD(+) + H2O. Its pathway is aromatic compound metabolism; 3-phenylpropanoate degradation. Functionally, catalyzes the insertion of one atom of molecular oxygen into position 2 of the phenyl ring of 3-(3-hydroxyphenyl)propionate (3-HPP) and hydroxycinnamic acid (3HCI). This chain is 3-(3-hydroxy-phenyl)propionate/3-hydroxycinnamic acid hydroxylase, found in Paraburkholderia xenovorans (strain LB400).